Here is a 238-residue protein sequence, read N- to C-terminus: MGKKLLQQRAGRGGINFRSPSWRRVGKAKIPNIEGEHIGKVIDIVHNPGTNAPLALIKLDDGTKFYVPSVQGLVVGQKIQIGKNAAISNGNIVEVGNVPEGTIISNIEKTRGDGGKFARSAGTYGVVVGKTGDKVLVKLSSEKIAQVSSNARAIVGVVAGGGVTEKPLLKAGNNYWKYKVKAKKWPHVRGVAMNAVSHPHGGGLHQSVSRPSTVSRNAPPGRKVGHIAARRTGRKEGA.

The tract at residues 199–238 (PHGGGLHQSVSRPSTVSRNAPPGRKVGHIAARRTGRKEGA) is disordered. A compositionally biased stretch (polar residues) spans 206–216 (QSVSRPSTVSR). The segment covering 223-238 (KVGHIAARRTGRKEGA) has biased composition (basic residues).

This sequence belongs to the universal ribosomal protein uL2 family. Part of the 50S ribosomal subunit. Forms a bridge to the 30S subunit in the 70S ribosome.

Functionally, one of the primary rRNA binding proteins. Required for association of the 30S and 50S subunits to form the 70S ribosome, for tRNA binding and peptide bond formation. It has been suggested to have peptidyltransferase activity; this is somewhat controversial. Makes several contacts with the 16S rRNA in the 70S ribosome. This chain is Large ribosomal subunit protein uL2, found in Sulfurisphaera tokodaii (strain DSM 16993 / JCM 10545 / NBRC 100140 / 7) (Sulfolobus tokodaii).